Reading from the N-terminus, the 430-residue chain is Bifunctional protein GlmU (430 aa).

The segment at 1 to 223 (MSISVVILAA…EEEFKGVNSK (223 aa)) is pyrophosphorylase. UDP-N-acetyl-alpha-D-glucosamine-binding positions include 8–11 (LAAG), lysine 22, and 81–82 (GT). Aspartate 102 is a Mg(2+) binding site. Residues glycine 135, glutamate 149, asparagine 164, and asparagine 221 each coordinate UDP-N-acetyl-alpha-D-glucosamine. Mg(2+) is bound at residue asparagine 221. Residues 224–244 (LDLARAEEIMQRRIKEALMMA) are linker. Residues 245–430 (GVTMCLPETI…NFFYKFFGDK (186 aa)) form an N-acetyltransferase region. UDP-N-acetyl-alpha-D-glucosamine-binding residues include arginine 308 and lysine 325. The Proton acceptor role is filled by histidine 336. 2 residues coordinate UDP-N-acetyl-alpha-D-glucosamine: tyrosine 339 and asparagine 350. Residues alanine 353, 359 to 360 (NY), serine 378, alanine 396, and arginine 413 contribute to the acetyl-CoA site.

This sequence in the N-terminal section; belongs to the N-acetylglucosamine-1-phosphate uridyltransferase family. It in the C-terminal section; belongs to the transferase hexapeptide repeat family. In terms of assembly, homotrimer. Mg(2+) is required as a cofactor.

Its subcellular location is the cytoplasm. The enzyme catalyses alpha-D-glucosamine 1-phosphate + acetyl-CoA = N-acetyl-alpha-D-glucosamine 1-phosphate + CoA + H(+). It catalyses the reaction N-acetyl-alpha-D-glucosamine 1-phosphate + UTP + H(+) = UDP-N-acetyl-alpha-D-glucosamine + diphosphate. Its pathway is nucleotide-sugar biosynthesis; UDP-N-acetyl-alpha-D-glucosamine biosynthesis; N-acetyl-alpha-D-glucosamine 1-phosphate from alpha-D-glucosamine 6-phosphate (route II): step 2/2. It participates in nucleotide-sugar biosynthesis; UDP-N-acetyl-alpha-D-glucosamine biosynthesis; UDP-N-acetyl-alpha-D-glucosamine from N-acetyl-alpha-D-glucosamine 1-phosphate: step 1/1. It functions in the pathway bacterial outer membrane biogenesis; LPS lipid A biosynthesis. Catalyzes the last two sequential reactions in the de novo biosynthetic pathway for UDP-N-acetylglucosamine (UDP-GlcNAc). The C-terminal domain catalyzes the transfer of acetyl group from acetyl coenzyme A to glucosamine-1-phosphate (GlcN-1-P) to produce N-acetylglucosamine-1-phosphate (GlcNAc-1-P), which is converted into UDP-GlcNAc by the transfer of uridine 5-monophosphate (from uridine 5-triphosphate), a reaction catalyzed by the N-terminal domain. The protein is Bifunctional protein GlmU of Sulfurovum sp. (strain NBC37-1).